The chain runs to 518 residues: Serine--tRNA ligase, mitochondrial (518 aa).

A mitochondrion-targeting transit peptide spans 1–34 (MAASIVRRLGPLVAGRGLRLRGGCVCNQSFKRSF). Position 110 is an N6-acetyllysine (Lys-110). Position 195 is an N6-succinyllysine (Lys-195). Position 299–301 (299–301 (TAE)) interacts with L-serine. Residue 330-332 (RAE) coordinates ATP. Lys-337 bears the N6-succinyllysine mark. Val-345 serves as a coordination point for ATP. Glu-352 lines the L-serine pocket. Position 418 to 421 (418 to 421 (EVTS)) interacts with ATP. Residue Thr-453 participates in L-serine binding. The interval 497-518 (PLQYIGPNQPQKPRLPGQPASS) is disordered.

Belongs to the class-II aminoacyl-tRNA synthetase family. Type-1 seryl-tRNA synthetase subfamily. Homodimer. The tRNA molecule probably binds across the dimer. Two N-termini starting at positions 35 and 37 have been identified by direct sequencing.

Its subcellular location is the mitochondrion matrix. The enzyme catalyses tRNA(Ser) + L-serine + ATP = L-seryl-tRNA(Ser) + AMP + diphosphate + H(+). The catalysed reaction is tRNA(Sec) + L-serine + ATP = L-seryl-tRNA(Sec) + AMP + diphosphate + H(+). The protein operates within aminoacyl-tRNA biosynthesis; selenocysteinyl-tRNA(Sec) biosynthesis; L-seryl-tRNA(Sec) from L-serine and tRNA(Sec): step 1/1. Its function is as follows. Catalyzes the attachment of serine to tRNA(Ser). Is also probably able to aminoacylate tRNA(Sec) with serine, to form the misacylated tRNA L-seryl-tRNA(Sec), which will be further converted into selenocysteinyl-tRNA(Sec). This Bos taurus (Bovine) protein is Serine--tRNA ligase, mitochondrial (SARS2).